Reading from the N-terminus, the 189-residue chain is Threonylcarbamoyl-AMP synthase (189 aa).

The YrdC-like domain occupies 7-189 (NFTVKGLTEQ…DAITGKIIRK (183 aa)).

The protein belongs to the SUA5 family. TsaC subfamily.

The protein resides in the cytoplasm. The enzyme catalyses L-threonine + hydrogencarbonate + ATP = L-threonylcarbamoyladenylate + diphosphate + H2O. In terms of biological role, required for the formation of a threonylcarbamoyl group on adenosine at position 37 (t(6)A37) in tRNAs that read codons beginning with adenine. Catalyzes the conversion of L-threonine, HCO(3)(-)/CO(2) and ATP to give threonylcarbamoyl-AMP (TC-AMP) as the acyladenylate intermediate, with the release of diphosphate. The protein is Threonylcarbamoyl-AMP synthase of Blochmanniella floridana.